The chain runs to 464 residues: Fumarate hydratase class II (464 aa).

Substrate is bound by residues 98 to 100, arginine 126, 129 to 132, 139 to 141, and threonine 187; these read SGT, HPND, and SSN. Histidine 188 functions as the Proton donor/acceptor in the catalytic mechanism. Serine 318 is a catalytic residue. Substrate is bound by residues serine 319 and 324-326; that span reads KVN.

It belongs to the class-II fumarase/aspartase family. Fumarase subfamily. As to quaternary structure, homotetramer.

The protein localises to the cytoplasm. The catalysed reaction is (S)-malate = fumarate + H2O. It functions in the pathway carbohydrate metabolism; tricarboxylic acid cycle; (S)-malate from fumarate: step 1/1. Functionally, involved in the TCA cycle. Catalyzes the stereospecific interconversion of fumarate to L-malate. The polypeptide is Fumarate hydratase class II (Photorhabdus laumondii subsp. laumondii (strain DSM 15139 / CIP 105565 / TT01) (Photorhabdus luminescens subsp. laumondii)).